Here is a 58-residue protein sequence, read N- to C-terminus: Large ribosomal subunit protein bL32 (58 aa).

It belongs to the bacterial ribosomal protein bL32 family.

In Anaplasma phagocytophilum (strain HZ), this protein is Large ribosomal subunit protein bL32.